Reading from the N-terminus, the 268-residue chain is Ribosomal RNA small subunit methyltransferase A (268 aa).

N11, L13, G37, E58, D86, and N104 together coordinate S-adenosyl-L-methionine.

Belongs to the class I-like SAM-binding methyltransferase superfamily. rRNA adenine N(6)-methyltransferase family. RsmA subfamily.

It is found in the cytoplasm. The enzyme catalyses adenosine(1518)/adenosine(1519) in 16S rRNA + 4 S-adenosyl-L-methionine = N(6)-dimethyladenosine(1518)/N(6)-dimethyladenosine(1519) in 16S rRNA + 4 S-adenosyl-L-homocysteine + 4 H(+). Functionally, specifically dimethylates two adjacent adenosines (A1518 and A1519) in the loop of a conserved hairpin near the 3'-end of 16S rRNA in the 30S particle. May play a critical role in biogenesis of 30S subunits. This chain is Ribosomal RNA small subunit methyltransferase A, found in Campylobacter fetus subsp. fetus (strain 82-40).